Reading from the N-terminus, the 469-residue chain is Diaminobutyrate--2-oxoglutarate transaminase (469 aa).

Lysine 290 carries the post-translational modification N6-(pyridoxal phosphate)lysine.

This sequence belongs to the class-III pyridoxal-phosphate-dependent aminotransferase family. It depends on pyridoxal 5'-phosphate as a cofactor.

It localises to the cytoplasm. It carries out the reaction L-2,4-diaminobutanoate + 2-oxoglutarate = L-aspartate 4-semialdehyde + L-glutamate. Its function is as follows. Involved in the degradation of ectoine, which allows H.elongata to utilize ectoine as both a carbon and a nitrogen source for growth. Probably catalyzes the conversion of L-2,4-diaminobutyrate (DABA) to L-aspartate beta-semialdehyde (ASA) by transamination with 2-oxoglutarate. In Halomonas elongata (strain ATCC 33173 / DSM 2581 / NBRC 15536 / NCIMB 2198 / 1H9), this protein is Diaminobutyrate--2-oxoglutarate transaminase.